The sequence spans 679 residues: Protein hook (679 aa).

Residues 6-123 (NEMYYSLLEW…RLLQLVLGCA (118 aa)) form the Calponin-homology (CH) domain. Coiled-coil stretches lie at residues 135-437 (EIMC…LKCG) and 480-574 (QTAL…QEIL).

This sequence belongs to the hook family. As to quaternary structure, homodimer. Interacts with microtubules via its N-terminus.

The protein resides in the cytoplasm. It is found in the cytoskeleton. Its subcellular location is the endosome. The protein localises to the synapse. Its function is as follows. Involved in endocytic trafficking by stabilizing organelles of the endocytic pathway. Probably acts as a cytoskeletal linker protein required to tether endosome vesicles to the cytoskeleton. Involved in modulation of endocytosis at stages required for down-regulation of membrane proteins that control synapse size. Not involved in synaptic vesicle recycling. Required in R7 cells for boss endocytosis into multivesicular bodies (MVBs). Has a role in regulating adult longevity. In Drosophila erecta (Fruit fly), this protein is Protein hook.